The following is an 85-amino-acid chain: Small ribosomal subunit protein bS16 (85 aa).

This sequence belongs to the bacterial ribosomal protein bS16 family.

In Nitrosomonas eutropha (strain DSM 101675 / C91 / Nm57), this protein is Small ribosomal subunit protein bS16.